A 1399-amino-acid chain; its full sequence is DNA-directed RNA polymerase subunit beta' (1399 aa).

Cysteine 70, cysteine 72, cysteine 85, and cysteine 88 together coordinate Zn(2+). Residues aspartate 460, aspartate 462, and aspartate 464 each coordinate Mg(2+). Residues cysteine 814, cysteine 888, cysteine 895, and cysteine 898 each coordinate Zn(2+).

It belongs to the RNA polymerase beta' chain family. The RNAP catalytic core consists of 2 alpha, 1 beta, 1 beta' and 1 omega subunit. When a sigma factor is associated with the core the holoenzyme is formed, which can initiate transcription. Requires Mg(2+) as cofactor. Zn(2+) serves as cofactor.

It catalyses the reaction RNA(n) + a ribonucleoside 5'-triphosphate = RNA(n+1) + diphosphate. DNA-dependent RNA polymerase catalyzes the transcription of DNA into RNA using the four ribonucleoside triphosphates as substrates. The chain is DNA-directed RNA polymerase subunit beta' from Pseudomonas fluorescens (strain SBW25).